The chain runs to 342 residues: Methionyl-tRNA formyltransferase (342 aa).

A (6S)-5,6,7,8-tetrahydrofolate-binding site is contributed by 119-122 (SILP).

It belongs to the Fmt family.

The catalysed reaction is L-methionyl-tRNA(fMet) + (6R)-10-formyltetrahydrofolate = N-formyl-L-methionyl-tRNA(fMet) + (6S)-5,6,7,8-tetrahydrofolate + H(+). Its function is as follows. Attaches a formyl group to the free amino group of methionyl-tRNA(fMet). The formyl group appears to play a dual role in the initiator identity of N-formylmethionyl-tRNA by promoting its recognition by IF2 and preventing the misappropriation of this tRNA by the elongation apparatus. The protein is Methionyl-tRNA formyltransferase of Nostoc sp. (strain PCC 7120 / SAG 25.82 / UTEX 2576).